The primary structure comprises 287 residues: Protease HtpX (287 aa).

2 consecutive transmembrane segments (helical) span residues 4-24 (IFLL…VMSI) and 33-53 (GGLL…SLAI). His139 serves as a coordination point for Zn(2+). Glu140 is a catalytic residue. Residue His143 participates in Zn(2+) binding. 2 helical membrane-spanning segments follow: residues 154-174 (LIQG…ASII) and 195-215 (AVVF…VAYF). Glu220 contributes to the Zn(2+) binding site.

The protein belongs to the peptidase M48B family. Zn(2+) is required as a cofactor.

It localises to the cell inner membrane. The sequence is that of Protease HtpX from Shewanella loihica (strain ATCC BAA-1088 / PV-4).